The following is a 514-amino-acid chain: DNA damage-binding protein CMR1 (514 aa).

A disordered region spans residues 26 to 116 (NLDSLSQSIK…VKQEEKEELS (91 aa)). Over residues 34–44 (IKRELPRASET) the composition is skewed to basic and acidic residues. The span at 45 to 55 (KKRKTTPRTKA) shows a compositional bias: basic residues. 2 stretches are compositionally biased toward basic and acidic residues: residues 56 to 65 (VKKEDVEPSR) and 92 to 116 (KFED…EELS). WD repeat units follow at residues 180–221 (ISHT…DDSE), 229–269 (PHGK…STEV), 280–320 (DYAL…KPLK), 327–367 (LHDK…KANA), 385–423 (SSRL…LIPD), 438–481 (GRWV…IAHL), and 483–514 (DSVG…YLFE).

Belongs to the WD repeat DDB2/WDR76 family.

DNA-binding protein that binds to both single- and double-stranded DNA. Binds preferentially to UV-damaged DNA. May be involved in DNA-metabolic processes. The protein is DNA damage-binding protein CMR1 (PRW1) of Scheffersomyces stipitis (strain ATCC 58785 / CBS 6054 / NBRC 10063 / NRRL Y-11545) (Yeast).